Reading from the N-terminus, the 532-residue chain is Type 2 DNA topoisomerase 6 subunit B (532 aa).

ATP-binding positions include Asn41, Asp75, 96 to 97 (SK), 105 to 112 (GMYGLGVK), and Lys427.

It belongs to the TOP6B family. In terms of assembly, homodimer. Heterotetramer of two Top6A and two Top6B chains.

The catalysed reaction is ATP-dependent breakage, passage and rejoining of double-stranded DNA.. Relaxes both positive and negative superturns and exhibits a strong decatenase activity. The sequence is that of Type 2 DNA topoisomerase 6 subunit B from Sulfurisphaera tokodaii (strain DSM 16993 / JCM 10545 / NBRC 100140 / 7) (Sulfolobus tokodaii).